We begin with the raw amino-acid sequence, 268 residues long: Oxygen-evolving enhancer protein 2-1, chloroplastic (268 aa).

The N-terminal 82 residues, 1-82, are a transit peptide targeting the chloroplast; it reads MASTQCFLHQ…IGSKVSPADA (82 aa).

This sequence belongs to the PsbP family.

It is found in the plastid. Its subcellular location is the chloroplast thylakoid membrane. Functionally, may be involved in the regulation of photosystem II. This Nicotiana tabacum (Common tobacco) protein is Oxygen-evolving enhancer protein 2-1, chloroplastic (PSBP1).